A 99-amino-acid polypeptide reads, in one-letter code: DNA-directed RNA polymerase subunit omega (99 aa).

Belongs to the RNA polymerase subunit omega family. The RNAP catalytic core consists of 2 alpha, 1 beta, 1 beta' and 1 omega subunit. When a sigma factor is associated with the core the holoenzyme is formed, which can initiate transcription.

It carries out the reaction RNA(n) + a ribonucleoside 5'-triphosphate = RNA(n+1) + diphosphate. In terms of biological role, promotes RNA polymerase assembly. Latches the N- and C-terminal regions of the beta' subunit thereby facilitating its interaction with the beta and alpha subunits. The sequence is that of DNA-directed RNA polymerase subunit omega from Deinococcus geothermalis (strain DSM 11300 / CIP 105573 / AG-3a).